Consider the following 225-residue polypeptide: Histone H1.11L (225 aa).

Low complexity-rich tracts occupy residues 1–23 (MSETAPAPAAEAAPAAAPAPAKA) and 31–43 (AAGGAKARKPAGP). Disordered stretches follow at residues 1 to 46 (MSET…PSVT) and 94 to 225 (SKGT…AKKK). N-acetylserine is present on Ser-2. Residues 41–114 (AGPSVTELIT…GASGSFRLSK (74 aa)) form the H15 domain. 4 stretches are compositionally biased toward basic residues: residues 123–138 (APKKKASAAKPKKPAA), 146–163 (KKPKKAVAVKKSPKKAKK), 171–189 (KSAKSPKKVTKAVKPKKAV), and 198–225 (KAVKPKAAKPKAAKPKAAKAKKAAAKKK).

The protein belongs to the histone H1/H5 family.

The protein resides in the nucleus. It localises to the chromosome. Functionally, histones H1 are necessary for the condensation of nucleosome chains into higher-order structures. The sequence is that of Histone H1.11L from Gallus gallus (Chicken).